A 65-amino-acid polypeptide reads, in one-letter code: Large ribosomal subunit protein bL33 (65 aa).

The interval 17–40 (SRSVPSSEKRSAGVSRYTTEKNRR) is disordered.

The protein belongs to the bacterial ribosomal protein bL33 family.

The polypeptide is Large ribosomal subunit protein bL33 (Prochlorococcus marinus (strain NATL1A)).